Consider the following 207-residue polypeptide: Large ribosomal subunit protein uL4 (207 aa).

Residues 53–85 form a disordered region; it reads ERSDVARTGKKFGRQKGGGTARHGDRKAPIFIG.

It belongs to the universal ribosomal protein uL4 family. Part of the 50S ribosomal subunit.

One of the primary rRNA binding proteins, this protein initially binds near the 5'-end of the 23S rRNA. It is important during the early stages of 50S assembly. It makes multiple contacts with different domains of the 23S rRNA in the assembled 50S subunit and ribosome. In terms of biological role, forms part of the polypeptide exit tunnel. The polypeptide is Large ribosomal subunit protein uL4 (Novosphingobium aromaticivorans (strain ATCC 700278 / DSM 12444 / CCUG 56034 / CIP 105152 / NBRC 16084 / F199)).